Here is a 522-residue protein sequence, read N- to C-terminus: Sugar carrier protein A (522 aa).

The Cytoplasmic segment spans residues 1–22; sequence MAGGSLAPAGVAKERAEQYQGK. 12 helical membrane-spanning segments follow: residues 23–43, 87–107, 121–141, 144–164, 173–193, 205–225, 286–306, 322–342, 351–371, 384–404, 430–450, and 453–473; these read VTFAVFVACMVAAVGGSIFGY, AFTSSLYLAGLAASLVAGPIT, ISFLIGAALNATAINLAMLLL, IMLGVGIGFGNQAVPLYLSEM, LNIMFQLATTSGIFTANMVNY, LSLGLAAAPALLMTIGGLLLP, LVMAIFMPTFQILTGINIILF, ALYSSAVTGAVLCSSTFISIA, FLLISGGIQMITCQVIVAIIL, SFSVLVVIMICLFVLAFGWSW, AVNLFFTFVIAQSFPSLLCAF, and GIFLFFAGWVTVMTAFVYIFL. At 474-522 the chain is on the cytoplasmic side; it reads PETKGVPIEEMIFLWRKHWFWKKIVPGQPEVDDSRESMEMGEAVASRIK.

It belongs to the major facilitator superfamily. Sugar transporter (TC 2.A.1.1) family.

It is found in the membrane. This is Sugar carrier protein A (STA) from Ricinus communis (Castor bean).